Consider the following 1070-residue polypeptide: Potassium/chloride cotransporter 3 (1070 aa).

15 helical membrane passes run glycine 92–isoleucine 112, leucine 114–cysteine 134, isoleucine 142–isoleucine 162, valine 174–valine 194, valine 196–threonine 216, leucine 228–valine 248, leucine 251–isoleucine 271, phenylalanine 400–methionine 420, valine 433–phenylalanine 453, threonine 473–leucine 493, proline 534–valine 554, isoleucine 557–valine 577, leucine 600–isoleucine 620, leucine 791–threonine 811, and phenylalanine 827–leucine 847.

In terms of tissue distribution, expressed in the amphid sheath glia and the cephalic sheath glia. Also expressed in the inner labial and outer labial sheath and socket glia and as well as phasmid sheath glia.

It is found in the cell membrane. In terms of biological role, probable potassium/chloride cotransporter that functions in the amphid sheath glial cells to regulate thermotaxis behavior. By maintaining chloride homeostasis, negatively regulates guanylate cyclase gcy-8 in the thermosensory AFD neurons and thereby controls the microvilli receptive ending morphology of the AFD neurons and thermotaxis. Modulates the temperature-evoked neuronal activity of the AFD neurons such as calcium responses to temperature gradients. Might also play a role in the chemotaxis behavior mediated by the sensory neurons AWA and AWC. The sequence is that of Potassium/chloride cotransporter 3 (kcc-3) from Caenorhabditis elegans.